Here is a 511-residue protein sequence, read N- to C-terminus: Alpha-amylase 2B (511 aa).

The N-terminal stretch at 1 to 15 is a signal peptide; it reads MKFFLLLFTIGFCWA. Pyrrolidone carboxylic acid is present on Gln16. 3 disulfide bridges follow: Cys43-Cys101, Cys85-Cys130, and Cys156-Cys175. Positions 115, 173, and 182 each coordinate Ca(2+). Arg210 is a binding site for chloride. Asp212 acts as the Nucleophile in catalysis. Residue His216 coordinates Ca(2+). The active-site Proton donor is the Glu248. Chloride contacts are provided by Asn313 and Arg352. Intrachain disulfides connect Cys393–Cys399 and Cys465–Cys477.

It belongs to the glycosyl hydrolase 13 family. As to quaternary structure, monomer. It depends on Ca(2+) as a cofactor. Chloride serves as cofactor.

The protein resides in the secreted. The enzyme catalyses Endohydrolysis of (1-&gt;4)-alpha-D-glucosidic linkages in polysaccharides containing three or more (1-&gt;4)-alpha-linked D-glucose units.. The chain is Alpha-amylase 2B (AMY2B) from Homo sapiens (Human).